Here is a 448-residue protein sequence, read N- to C-terminus: Exodeoxyribonuclease 7 large subunit (448 aa).

This sequence belongs to the XseA family. As to quaternary structure, heterooligomer composed of large and small subunits.

It is found in the cytoplasm. The enzyme catalyses Exonucleolytic cleavage in either 5'- to 3'- or 3'- to 5'-direction to yield nucleoside 5'-phosphates.. In terms of biological role, bidirectionally degrades single-stranded DNA into large acid-insoluble oligonucleotides, which are then degraded further into small acid-soluble oligonucleotides. The polypeptide is Exodeoxyribonuclease 7 large subunit (Shewanella baltica (strain OS223)).